Reading from the N-terminus, the 629-residue chain is DNA mismatch repair protein MutL (629 aa).

A disordered region spans residues 376 to 396 (QYHEKPQQNQPHFSNTPVLPN). Polar residues predominate over residues 382-396 (QQNQPHFSNTPVLPN).

It belongs to the DNA mismatch repair MutL/HexB family.

In terms of biological role, this protein is involved in the repair of mismatches in DNA. It is required for dam-dependent methyl-directed DNA mismatch repair. May act as a 'molecular matchmaker', a protein that promotes the formation of a stable complex between two or more DNA-binding proteins in an ATP-dependent manner without itself being part of a final effector complex. This Haemophilus influenzae (strain PittEE) protein is DNA mismatch repair protein MutL.